Consider the following 240-residue polypeptide: Probable transcriptional regulatory protein VFMJ11_A0186 (240 aa).

This sequence belongs to the TACO1 family.

Its subcellular location is the cytoplasm. This is Probable transcriptional regulatory protein VFMJ11_A0186 from Aliivibrio fischeri (strain MJ11) (Vibrio fischeri).